Here is a 223-residue protein sequence, read N- to C-terminus: MNVYQTIANFGTNILESLGLEAALSPTLSNTYIYGIPVLGAIFSGLITKKLTKSTAKSLIVQALFVILGTLAFLVITLASPAKPETGAFNQATLWIAFVVICFIMFFIGANRSIFWSTITELKVNKEIVGLAVGFISIIGFSKDVWLSPLLTGTTNQFIVKNSQGTSFYSQQALVAWAIFALINACLALLVTYMIVRKVKYGKVWVNPKFKKVFALGEQQYGH.

A run of 5 helical transmembrane segments spans residues 28–48 (LSNTYIYGIPVLGAIFSGLIT), 59–79 (LIVQALFVILGTLAFLVITLA), 88–108 (AFNQATLWIAFVVICFIMFFI), 128–148 (IVGLAVGFISIIGFSKDVWLS), and 176–196 (AWAIFALINACLALLVTYMIV).

It is found in the cell membrane. This is an uncharacterized protein from Mycoplasma pneumoniae (strain ATCC 29342 / M129 / Subtype 1) (Mycoplasmoides pneumoniae).